Reading from the N-terminus, the 100-residue chain is Enhancer of yellow 2 transcription factor (100 aa).

This sequence belongs to the ENY2 family. In terms of assembly, component of the nuclear pore complex (NPC)-associated AMEX complex (anchoring and mRNA export complex), composed of at least e(y)2 and xmas-2. Component of the SAGA transcription coactivator-HAT complexes, at least composed of Ada2b, e(y)2, Pcaf/Gcn5, Taf10 and Nipped-A/Trrap. Within the SAGA complex, e(y)2, Sgf11, and not/nonstop form an additional subcomplex of SAGA called the DUB module (deubiquitination module). Component of the THO complex, composed of at least e(y)2, HPR1, THO2, THOC5, THOC6 and THOC7. Interacts with e(y)1. Interacts with su(Hw) (via zinc fingers). Interacts with xmas-2; required for localization to the nuclear periphery. Interacts with the nuclear pore complex (NPC).

Its subcellular location is the nucleus. The protein localises to the nucleoplasm. It is found in the cytoplasm. Its function is as follows. Involved in mRNA export coupled transcription activation by association with both the AMEX and the SAGA complexes. The SAGA complex is a multiprotein complex that activates transcription by remodeling chromatin and mediating histone acetylation and deubiquitination. Within the SAGA complex, participates in a subcomplex that specifically deubiquitinates histone H2B. The SAGA complex is recruited to specific gene promoters by activators, where it is required for transcription. Required for nuclear receptor-mediated transactivation. Involved in transcription elongation by recruiting the THO complex onto nascent mRNA. The AMEX complex functions in docking export-competent ribonucleoprotein particles (mRNPs) to the nuclear entrance of the nuclear pore complex (nuclear basket). AMEX participates in mRNA export and accurate chromatin positioning in the nucleus by tethering genes to the nuclear periphery. The chain is Enhancer of yellow 2 transcription factor from Drosophila ananassae (Fruit fly).